Here is a 399-residue protein sequence, read N- to C-terminus: Methylthioribose kinase (399 aa).

ATP is bound by residues asparagine 40, lysine 57, and 111–113 (EDL). Aspartate 229 provides a ligand contact to substrate. Position 246 to 248 (246 to 248 (DAE)) interacts with ATP. Arginine 344 is a binding site for substrate.

The protein belongs to the methylthioribose kinase family. In terms of assembly, homodimer.

It catalyses the reaction 5-(methylsulfanyl)-D-ribose + ATP = 5-(methylsulfanyl)-alpha-D-ribose 1-phosphate + ADP + H(+). It functions in the pathway amino-acid biosynthesis; L-methionine biosynthesis via salvage pathway; S-methyl-5-thio-alpha-D-ribose 1-phosphate from S-methyl-5'-thioadenosine (hydrolase route): step 2/2. In terms of biological role, catalyzes the phosphorylation of methylthioribose into methylthioribose-1-phosphate. The polypeptide is Methylthioribose kinase (Yersinia enterocolitica serotype O:8 / biotype 1B (strain NCTC 13174 / 8081)).